Here is a 325-residue protein sequence, read N- to C-terminus: Protein VP6-B (325 aa).

Disordered regions lie at residues Ile23–Ala123 and Val176–Ala229. Composition is skewed to basic and acidic residues over residues Glu32 to Asp52 and Ser61 to Ile79. Gly residues predominate over residues Lys106 to Ala123. 2 stretches are compositionally biased toward basic and acidic residues: residues Val176–Arg201 and Pro210–Glu226.

Belongs to the orbivirus VP6 family.

The protein resides in the virion. Its function is as follows. Surrounds and interacts with the genomic dsRNA. Possesses ss- and dsRNA-binding capacity. Its hydrophilic nature and capability to bind ss- and dsRNA suggest that it interacts with BTV genomic RNA. The sequence is that of Protein VP6-B (Segment-9) from Bluetongue virus 10 (isolate USA) (BTV 10).